The primary structure comprises 464 residues: Olfactomedin (464 aa).

The N-terminal stretch at 1-16 is a signal peptide; it reads MYICLLTLVLIHAAAA. N-linked (GlcNAc...) asparagine glycans are attached at residues N21, N85, N143, N228, N279, and N383. The Olfactomedin-like domain maps to 192-464; that stretch reads SCQHQGLAHI…LLHYDIALKP (273 aa). Residues C193 and C394 are joined by a disulfide bond.

In terms of assembly, oligomer; disulfide-linked. Most, if not all, of the six potential sites for N-glycosylation carry carbohydrate moieties of 8-10 sugar residues. Expressed exclusively in olfactory neuroepithelium.

The protein resides in the secreted. It localises to the extracellular space. In terms of biological role, may influence the maintenance, growth, or differentiation of chemosensory cilia on the apical dendrites of olfactory neurons. Major component of the extracellular matrix of the olfactory neuroepithelium. This Aquarana catesbeiana (American bullfrog) protein is Olfactomedin.